Reading from the N-terminus, the 541-residue chain is 5' exonuclease Apollo (541 aa).

A Glycyl lysine isopeptide (Lys-Gly) (interchain with G-Cter in SUMO2) cross-link involves residue lysine 334. A disordered region spans residues 455 to 475 (PLLSRGDSGSPARGNQSDCVG). Residues 492–507 (ESRGLALKYLLTPVHF) carry the TBM motif.

The protein belongs to the DNA repair metallo-beta-lactamase (DRMBL) family. Interacts with MUS81, MRE11 and FANCD2. Interacts with HSPA2, HSPA8 and HSPA14. Interacts with SPAG5. Interacts with TERF2; the interaction is direct. Ubiquitinated, leading to its degradation. Interaction with TERF2 protects it from ubiquitination.

The protein localises to the chromosome. The protein resides in the telomere. It localises to the nucleus. Its subcellular location is the cytoplasm. It is found in the cytoskeleton. The protein localises to the microtubule organizing center. The protein resides in the centrosome. The enzyme catalyses a beta-lactam + H2O = a substituted beta-amino acid. Functionally, 5'-3' exonuclease that plays a central role in telomere maintenance and protection during S-phase. Participates in the protection of telomeres against non-homologous end-joining (NHEJ)-mediated repair, thereby ensuring that telomeres do not fuse. Plays a key role in telomeric loop (T loop) formation by being recruited by TERF2 at the leading end telomeres and by processing leading-end telomeres immediately after their replication via its exonuclease activity: generates 3' single-stranded overhang at the leading end telomeres avoiding blunt leading-end telomeres that are vulnerable to end-joining reactions and expose the telomere end in a manner that activates the DNA repair pathways. Together with TERF2, required to protect telomeres from replicative damage during replication by controlling the amount of DNA topoisomerase (TOP1, TOP2A and TOP2B) needed for telomere replication during fork passage and prevent aberrant telomere topology. Also involved in response to DNA damage: plays a role in response to DNA interstrand cross-links (ICLs) by facilitating double-strand break formation. In case of spindle stress, involved in prophase checkpoint. Possesses beta-lactamase activity, catalyzing the hydrolysis of penicillin G and nitrocefin. Exhibits no activity towards other beta-lactam antibiotic classes including cephalosporins (cefotaxime) and carbapenems (imipenem). The protein is 5' exonuclease Apollo (Dclre1b) of Mus musculus (Mouse).